We begin with the raw amino-acid sequence, 125 residues long: Succinate dehydrogenase cytochrome b560 subunit (125 aa).

3 consecutive transmembrane segments (helical) span residues 29–49, 68–88, and 104–124; these read ISGV…KLAT, ILPW…INGI, and IIKD…FKFI. A heme-binding site is contributed by histidine 83.

This sequence belongs to the cytochrome b560 family. In terms of assembly, forms part of complex II containing four subunits: a 70 kDa flavoprotein (FP), a 27 kDa iron-sulfur protein (IP), a cytochrome B and a membrane-anchoring protein. The cofactor is heme.

It localises to the mitochondrion inner membrane. Its pathway is carbohydrate metabolism; tricarboxylic acid cycle. Its function is as follows. Membrane-anchoring subunit of succinate dehydrogenase (SDH) that is involved in complex II of the mitochondrial electron transport chain and is responsible for transferring electrons from succinate to ubiquinone (coenzyme Q). The sequence is that of Succinate dehydrogenase cytochrome b560 subunit (SDH3) from Porphyra purpurea (Red seaweed).